The sequence spans 111 residues: Large ribosomal subunit protein bL20c (111 aa).

The protein belongs to the bacterial ribosomal protein bL20 family.

The protein localises to the plastid. It localises to the chloroplast. In terms of biological role, binds directly to 23S ribosomal RNA and is necessary for the in vitro assembly process of the 50S ribosomal subunit. It is not involved in the protein synthesizing functions of that subunit. In Ostreococcus tauri, this protein is Large ribosomal subunit protein bL20c.